Consider the following 184-residue polypeptide: Putative DNA-directed RNA polymerase subunit 454R (184 aa).

This sequence belongs to the archaeal Rpo5/eukaryotic RPB5 RNA polymerase subunit family.

Its function is as follows. Component of the DNA-dependent RNA polymerase that catalyzes the transcription in the cytoplasm of viral DNA into RNA using the four ribonucleoside triphosphates as substrates. This Invertebrate iridescent virus 6 (IIV-6) protein is Putative DNA-directed RNA polymerase subunit 454R.